The primary structure comprises 415 residues: Acetate kinase (415 aa).

N8 is a Mg(2+) binding site. ATP is bound at residue K15. R106 serves as a coordination point for substrate. D163 acts as the Proton donor/acceptor in catalysis. Residues 222-226, 296-298, and 344-348 each bind ATP; these read HLGNG, DLR, and GIGEN. E397 contacts Mg(2+).

Belongs to the acetokinase family. In terms of assembly, homodimer. Mg(2+) is required as a cofactor. Mn(2+) serves as cofactor.

It is found in the cytoplasm. The catalysed reaction is acetate + ATP = acetyl phosphate + ADP. It functions in the pathway metabolic intermediate biosynthesis; acetyl-CoA biosynthesis; acetyl-CoA from acetate: step 1/2. Its function is as follows. Catalyzes the formation of acetyl phosphate from acetate and ATP. Can also catalyze the reverse reaction. The chain is Acetate kinase from Thermosynechococcus vestitus (strain NIES-2133 / IAM M-273 / BP-1).